We begin with the raw amino-acid sequence, 352 residues long: MASRCKIHLTVAYLLILCILASAQSKQMTTETVVLNVTALSEINQTKYNVQINLNIGLLDNDIFINGAPLKPSGVTRMTCPALLLDGYNVSSGNSVDGLVSCELRLMVNQSYVQSDAAEQLLFLVLSQEIIQLADEKVQQPEISEVEIMWNQSSEQMTQVTSIYPSARSKLSIIPRENDVLVTDASVQSAVEDQVRNTTSHYLLKNSETTQEEIAAPGKLPETPLRMDPETLYESREEEERRSDSLLLEPPLSGSMSSYSVACQWVEKLRDKLRRFLSDSVPLFFLVMWVVVVGVAGSAVVIKILDLIFPSCEHRGFFHLNPETLMPDDEKVSLIDNMEGDMTEKSILLIEK.

The first 25 residues, 1 to 25 (MASRCKIHLTVAYLLILCILASAQS), serve as a signal peptide directing secretion. Topologically, residues 26-281 (KQMTTETVVL…KLRRFLSDSV (256 aa)) are extracellular. Residues asparagine 36, asparagine 44, asparagine 89, asparagine 109, asparagine 151, and asparagine 197 are each glycosylated (N-linked (GlcNAc...) asparagine). The interval 206 to 245 (NSETTQEEIAAPGKLPETPLRMDPETLYESREEEERRSDS) is disordered. Residues 225–244 (LRMDPETLYESREEEERRSD) are compositionally biased toward basic and acidic residues. Residues 282–302 (PLFFLVMWVVVVGVAGSAVVI) traverse the membrane as a helical segment. The Cytoplasmic portion of the chain corresponds to 303–352 (KILDLIFPSCEHRGFFHLNPETLMPDDEKVSLIDNMEGDMTEKSILLIEK).

Its subcellular location is the membrane. In Danio rerio (Zebrafish), this protein is Glycoprotein integral membrane protein 1 (ginm1).